The following is a 281-amino-acid chain: 4-diphosphocytidyl-2-C-methyl-D-erythritol kinase (281 aa).

Residue K15 is part of the active site. 98-108 (PTGAGLGGGSS) lines the ATP pocket. The active site involves D140.

The protein belongs to the GHMP kinase family. IspE subfamily.

It carries out the reaction 4-CDP-2-C-methyl-D-erythritol + ATP = 4-CDP-2-C-methyl-D-erythritol 2-phosphate + ADP + H(+). The protein operates within isoprenoid biosynthesis; isopentenyl diphosphate biosynthesis via DXP pathway; isopentenyl diphosphate from 1-deoxy-D-xylulose 5-phosphate: step 3/6. Catalyzes the phosphorylation of the position 2 hydroxy group of 4-diphosphocytidyl-2C-methyl-D-erythritol. In Neisseria gonorrhoeae (strain ATCC 700825 / FA 1090), this protein is 4-diphosphocytidyl-2-C-methyl-D-erythritol kinase.